Reading from the N-terminus, the 2392-residue chain is Protein Ycf2 (2392 aa).

Position 1658–1665 (1658–1665 (GPTEIGKS)) interacts with ATP.

Belongs to the Ycf2 family.

Its subcellular location is the plastid. The protein resides in the chloroplast stroma. Probable ATPase of unknown function. Its presence in a non-photosynthetic plant (Epifagus virginiana) and experiments in tobacco indicate that it has an essential function which is probably not related to photosynthesis. This Anthoceros angustus (Hornwort) protein is Protein Ycf2.